Here is a 540-residue protein sequence, read N- to C-terminus: Homoserine O-acetyltransferase (540 aa).

Positions 66-404 (NVILICHALT…QHGHDAFLLE (339 aa)) constitute an AB hydrolase-1 domain. Serine 171 (nucleophile) is an active-site residue. Arginine 240 contacts substrate. Positions 262–284 (QDTDKSGIKGTTGTEGKNSSEIS) are disordered. Residues aspartate 365 and histidine 398 contribute to the active site. Aspartate 399 provides a ligand contact to substrate. 2 consecutive CBS domains span residues 425-484 (MNRN…ELDE) and 486-540 (ITRD…GKYD).

This sequence belongs to the AB hydrolase superfamily. MetX family. Homodimer.

It is found in the cytoplasm. It carries out the reaction L-homoserine + acetyl-CoA = O-acetyl-L-homoserine + CoA. The protein operates within amino-acid biosynthesis; L-methionine biosynthesis via de novo pathway; O-acetyl-L-homoserine from L-homoserine: step 1/1. Its function is as follows. Transfers an acetyl group from acetyl-CoA to L-homoserine, forming acetyl-L-homoserine. In vitro, can also use propionyl-CoA or butiryl-CoA as acyl donor. The sequence is that of Homoserine O-acetyltransferase from Methanosarcina acetivorans (strain ATCC 35395 / DSM 2834 / JCM 12185 / C2A).